A 504-amino-acid polypeptide reads, in one-letter code: MTQAVMLQGTASDVGKSVLAAGLCRIFYQDGLRTAPFKSQNMALNSGITSDGKEMGRAQIFQAEAAGITPDVRMNPVLLKPTSDRQAQVVLMGKVATNMDAVSYHDYKPRLREQILAVYNSLAQEYDVIVLEGAGSPAEINLRDRDIVNMGMAEMAQCPVILVADIDRGGVFAAIYGTLALLHKQERDRVKGVIINKFRGDVALLYSGIEQIESLTGVPVLGVMPWLDVDLEDEDGVALQNDKYRGNAPRDITIAIVQLPHISNFTDFNALAAQPDVRIRYIRRPEALTDADLVILPGSKNTLSDLAWLRESGMADALLQTHRQGVPVMGICGGYQMLGDTIVDEVESGLGTQPGLGLLNTITRFAQDKITTQVNATMSGELPSWLAAAAGLPVRGYEIHMGETVLQEGCCTAMTLQRNGCSVADGAVTADGLAFGTYLHGLFDSDAFTRAVVNGLRARKGLAPWETTFCYAEHKVRQFDLLAEAMRQHIDKIYTIMQQHQEPV.

Positions 251–448 (DITIAIVQLP…LHGLFDSDAF (198 aa)) constitute a GATase cobBQ-type domain. The active-site Nucleophile is Cys332. His440 is an active-site residue.

It belongs to the CobB/CobQ family. CobQ subfamily.

It participates in cofactor biosynthesis; adenosylcobalamin biosynthesis. In terms of biological role, catalyzes amidations at positions B, D, E, and G on adenosylcobyrinic A,C-diamide. NH(2) groups are provided by glutamine, and one molecule of ATP is hydrogenolyzed for each amidation. The chain is Cobyric acid synthase from Salmonella gallinarum (strain 287/91 / NCTC 13346).